The primary structure comprises 157 residues: Cell cycle regulator of non-homologous end joining (157 aa).

Residue Met-1 is modified to N-acetylmethionine. Positions 1 to 21 (METLQSETKTRVLPSWLTAQV) match the KBM motif. A disordered region spans residues 77–147 (KACEQPALAG…SPEEEEEEDV (71 aa)). The segment covering 98-107 (VSPHTSSGSS) has biased composition (low complexity). Over residues 123–136 (SPSQRPGGSSSACS) the composition is skewed to polar residues. An XLM motif is present at residues 147–157 (VLKYVREIFFS).

As to quaternary structure, interacts (via KBM motif) with XRCC5/Ku80 and XRCC6/Ku70 heterodimer. Interacts (via XLF motif) with TRIM28/KAP1, ATM, MRE11, NBN and RAD50. Interacts with splicing factor SF3B1. Interacts with ERCC6L2; this interaction is DNA independent. In terms of assembly, does not interact with XRCC5/Ku80 and XRCC6/Ku70 heterodimer. Interacts (via KBM motif) with XRCC5/Ku80 and XRCC6/Ku70 heterodimer.

It is found in the cytoplasm. The protein resides in the nucleus. The protein localises to the chromosome. Functionally, cell-cycle-specific regulator of classical non-homologous end joining (NHEJ) of DNA double-strand break (DSB) repair, which can act both as an activator or inhibitor of NHEJ, depending on the cell cycle phase. Acts as a regulator of DNA repair pathway choice by specifically inhibiting classical NHEJ during the S and G2 phases, thereby promoting error-free repair by homologous recombination during cell cycle phases when sister chromatids are present. Preferentially protects single-stranded overhangs at break sites by inhibiting classical NHEJ, thereby creating a local environment that favors homologous recombination. Acts via interaction with XRCC5/Ku80 and XRCC6/Ku70. In contrast, acts as an activator of NHEJ during G1 phase of the cell cycle: promotes classical NHEJ in G1 phase cells via multivalent interactions that increase the affinity of DNA damage response proteins for DSB-associated chromatin. Also involved in immunoglobulin V(D)J recombination. May also act as an indirect regulator of proteasome. The sequence is that of Cell cycle regulator of non-homologous end joining from Homo sapiens (Human).